The chain runs to 467 residues: Chromosomal replication initiator protein DnaA (467 aa).

The interval 1 to 90 (MSLSLWQQCL…KPVTQTPQAA (90 aa)) is domain I, interacts with DnaA modulators. The tract at residues 91–130 (VTSNVAAPALVAQTQPQRAAPSTRSGWDNVPAPAEPTYRS) is domain II. Positions 131-347 (NVNVKHTFDN…GALNRVIANA (217 aa)) are domain III, AAA+ region. Residues G175, G177, K178, and T179 each contribute to the ATP site. A domain IV, binds dsDNA region spans residues 348–467 (NFTGRAITID…FSNLIRTLSS (120 aa)).

The protein belongs to the DnaA family. In terms of assembly, oligomerizes as a right-handed, spiral filament on DNA at oriC.

The protein localises to the cytoplasm. Plays an essential role in the initiation and regulation of chromosomal replication. ATP-DnaA binds to the origin of replication (oriC) to initiate formation of the DNA replication initiation complex once per cell cycle. Binds the DnaA box (a 9 base pair repeat at the origin) and separates the double-stranded (ds)DNA. Forms a right-handed helical filament on oriC DNA; dsDNA binds to the exterior of the filament while single-stranded (ss)DNA is stabiized in the filament's interior. The ATP-DnaA-oriC complex binds and stabilizes one strand of the AT-rich DNA unwinding element (DUE), permitting loading of DNA polymerase. After initiation quickly degrades to an ADP-DnaA complex that is not apt for DNA replication. Binds acidic phospholipids. The polypeptide is Chromosomal replication initiator protein DnaA (Shigella dysenteriae serotype 1 (strain Sd197)).